A 472-amino-acid polypeptide reads, in one-letter code: Alkaline phosphatase (472 aa).

A signal peptide spans 1 to 21 (MKQSAIALALLSCLITPVSQA). D74 is a Mg(2+) binding site. D74 is a binding site for Zn(2+). Residue S125 is the Phosphoserine intermediate of the active site. Mg(2+) contacts are provided by D176 and T178. 2 cysteine pairs are disulfide-bonded: C191-C201 and C309-C359. Residue E345 participates in Mg(2+) binding. Zn(2+)-binding residues include D350, H354, D392, H393, and H435.

It belongs to the alkaline phosphatase family. Homodimer. Mg(2+) serves as cofactor. The cofactor is Zn(2+).

It localises to the periplasm. The enzyme catalyses a phosphate monoester + H2O = an alcohol + phosphate. The chain is Alkaline phosphatase (phoA) from Escherichia fergusonii (strain ATCC 35469 / DSM 13698 / CCUG 18766 / IAM 14443 / JCM 21226 / LMG 7866 / NBRC 102419 / NCTC 12128 / CDC 0568-73).